The primary structure comprises 351 residues: Calcium homeostasis modulator 1 (351 aa).

The Cytoplasmic portion of the chain corresponds to 1–20; that stretch reads MDKFRMMFQFLQSNQESFMN. The segment at 9–36 is central pore; sequence QFLQSNQESFMNGICGIMALASAQMYSS. The helical transmembrane segment at 21-36 threads the bilayer; sequence GICGIMALASAQMYSS. The Extracellular portion of the chain corresponds to 37–48; the sequence is FEFSCPCMPEYN. 2 cysteine pairs are disulfide-bonded: cysteine 41–cysteine 126 and cysteine 43–cysteine 160. The helical transmembrane segment at 49-71 threads the bilayer; the sequence is YTYGIGLLIIPPIWFFLLGFVLN. The phospholipid-binding stretch occupies residues 62 to 69; that stretch reads WFFLLGFV. Over 72-98 the chain is Cytoplasmic; that stretch reads NNVSVLAEEWKRPTGRRTKDPSVLRYM. Residues 99-124 traverse the membrane as a helical segment; sequence LCSITQRSLIAPAVWVSVTLMDGKSF. Cysteine 100 carries the S-palmitoyl cysteine lipid modification. Residues 104–116 form a phospholipid-binding region; the sequence is QRSLIAPAVWVSV. The Extracellular portion of the chain corresponds to 125–177; it reads LCAFSINLDIEKFGNASLVIGMTETEKLKFLARIPCKDLFEDNEVRVAATRYI. Asparagine 139 carries N-linked (GlcNAc...) asparagine glycosylation. Residues 178-203 form a helical membrane-spanning segment; that stretch reads KCISQACGWMFLLMMTFTAFLIRAIR. A phospholipid-binding region spans residues 189 to 199; sequence LLMMTFTAFLI. Topologically, residues 204 to 351 are cytoplasmic; it reads PCFTQAAFLK…KEWAVYYSKV (148 aa). The S-palmitoyl cysteine moiety is linked to residue cysteine 205. The segment at 259 to 281 is disordered; the sequence is HRHQSKDTSDAEEEEKQRSDEDK. Basic and acidic residues predominate over residues 263 to 281; it reads SKDTSDAEEEEKQRSDEDK.

This sequence belongs to the CALHM family. As to quaternary structure, oligomerizes to form hexamers and octamers. Does not form gap junctions. Associates with CALHM3 as a pore-forming subunit in a hetero-hexameric channel complex. In terms of processing, N-glycosylated. Post-translationally, palmitoylated.

It is found in the cell membrane. Its subcellular location is the endoplasmic reticulum membrane. The protein localises to the basolateral cell membrane. The enzyme catalyses ATP(in) = ATP(out). It carries out the reaction Ca(2+)(in) = Ca(2+)(out). The catalysed reaction is Mg(2+)(in) = Mg(2+)(out). It catalyses the reaction Na(+)(in) = Na(+)(out). The enzyme catalyses K(+)(in) = K(+)(out). It carries out the reaction Li(+)(in) = Li(+)(out). The catalysed reaction is Rb(+)(in) = Rb(+)(out). It catalyses the reaction Cs(+)(in) = Cs(+)(out). The enzyme catalyses chloride(in) = chloride(out). With respect to regulation, activated in response to membrane depolarization and low extracellular Ca(2+) concentration. Inhibited by ruthenium red. Functionally, pore-forming subunit of a voltage-gated ion channel. Has poor ion selectivity and forms a wide pore that mediates permeation of small ions including Ca(2+), Na(+), K(+) and Cl(-), as well as larger ions such as ATP(4-). This is Calcium homeostasis modulator 1 from Oryzias latipes (Japanese rice fish).